Consider the following 309-residue polypeptide: uncharacterized protein (309 aa).

A helical membrane pass occupies residues 23-39; that stretch reads RFNVAIIGGTGGLGRAI.

This sequence belongs to the NmrA-type oxidoreductase family.

Its subcellular location is the membrane. This is an uncharacterized protein from Saccharomyces cerevisiae (strain ATCC 204508 / S288c) (Baker's yeast).